We begin with the raw amino-acid sequence, 460 residues long: UDP-N-acetylmuramoylalanine--D-glutamate ligase (460 aa).

Gly-120–Thr-126 contributes to the ATP binding site.

The protein belongs to the MurCDEF family.

The protein localises to the cytoplasm. The enzyme catalyses UDP-N-acetyl-alpha-D-muramoyl-L-alanine + D-glutamate + ATP = UDP-N-acetyl-alpha-D-muramoyl-L-alanyl-D-glutamate + ADP + phosphate + H(+). The protein operates within cell wall biogenesis; peptidoglycan biosynthesis. Its function is as follows. Cell wall formation. Catalyzes the addition of glutamate to the nucleotide precursor UDP-N-acetylmuramoyl-L-alanine (UMA). The sequence is that of UDP-N-acetylmuramoylalanine--D-glutamate ligase from Lactobacillus delbrueckii subsp. bulgaricus (strain ATCC 11842 / DSM 20081 / BCRC 10696 / JCM 1002 / NBRC 13953 / NCIMB 11778 / NCTC 12712 / WDCM 00102 / Lb 14).